We begin with the raw amino-acid sequence, 1392 residues long: ATP-dependent helicase/nuclease subunit A (1392 aa).

A UvrD-like helicase ATP-binding domain is found at Asn-3–Arg-489. An ATP-binding site is contributed by Ala-24–Thr-31. 3 disordered regions span residues Arg-291–Asp-319, Lys-555–Ala-594, and Gly-1051–Lys-1126. 2 stretches are compositionally biased toward basic and acidic residues: residues Glu-305 to Asp-319 and Ser-567 to Glu-583. Positions Arg-556 to Gly-886 constitute a UvrD-like helicase C-terminal domain. Acidic residues predominate over residues Ser-584–Ala-594. The segment covering Ala-1088–Leu-1113 has biased composition (basic and acidic residues).

Belongs to the helicase family. AddA subfamily. In terms of assembly, heterodimer of AddA and AddB/RexB. Mg(2+) is required as a cofactor.

It catalyses the reaction Couples ATP hydrolysis with the unwinding of duplex DNA by translocating in the 3'-5' direction.. The enzyme catalyses ATP + H2O = ADP + phosphate + H(+). Its function is as follows. The heterodimer acts as both an ATP-dependent DNA helicase and an ATP-dependent, dual-direction single-stranded exonuclease. Recognizes the chi site generating a DNA molecule suitable for the initiation of homologous recombination. The AddA nuclease domain is required for chi fragment generation; this subunit has the helicase and 3' -&gt; 5' nuclease activities. The protein is ATP-dependent helicase/nuclease subunit A of Desulfitobacterium hafniense (strain DSM 10664 / DCB-2).